The chain runs to 589 residues: Intermediate filament protein ifb-1 (589 aa).

A disordered region spans residues 1-42 (MSSHKESSEYEMQYRSTIQPRTAVRSQSRQSGNYVSGGNGAG). The head stretch occupies residues 8-84 (SEYEMQYRST…LEATDKEKKT (77 aa)). The segment covering 14 to 30 (YRSTIQPRTAVRSQSRQ) has biased composition (polar residues). In terms of domain architecture, IF rod spans 81–433 (EKKTLQGLND…KMLEGEETRV (353 aa)). The coil 1A stretch occupies residues 85-116 (LQGLNDRLGNYIDRVKKLEEQNRKLVADLDEL). Residues 117 to 130 (RGKWGKDTSEIKIK) are linker 1. Residues 131–268 (YSESLSTARK…RVHEQEVKEL (138 aa)) form a coil 1B region. The tract at residues 269 to 285 (QALLAQAPADTREFFKN) is linker 12. A coil 2 region spans residues 286-433 (ELALAIRDIK…KMLEGEETRV (148 aa)). Residues 434–588 (GLTQMVEQAV…THTQKTIQSG (155 aa)) form a tail region. The interval 444-470 (KTHSLQQQENTDSTRSVRGEVSTKTTF) is disordered. An LTD domain is found at 466–584 (TKTTFQRSAK…EERATHTQKT (119 aa)).

This sequence belongs to the intermediate filament family. As to quaternary structure, forms some heteromeric filaments with ifa-1, ifa-2, ifa-3 and probably ifa-4. Expressed in epidermal cells. Expressed in amphid sensory neurons, the excretory cells, the vulva, the uterus, the rectum and some neurons of the tail. Isoform a and isoform b display a similar pattern of expression. Isoform a is predominant in pharyngeal tonofilaments.

The protein localises to the cytoplasm. Its function is as follows. Cytoplasmic intermediate filaments provide mechanical strength to cells. Essential protein, involved in attachment structures in epidermal cells that connect muscles to the external cuticle. Required in morphogenesis and epidermal integrity. Probable component of embryonic epidermal attachment structures. Functions in larval muscle attachment independently of ifa-2. The polypeptide is Intermediate filament protein ifb-1 (ifb-1) (Caenorhabditis elegans).